A 502-amino-acid polypeptide reads, in one-letter code: Glycerol kinase (502 aa).

Thr-14 contributes to the ADP binding site. Residues Thr-14, Thr-15, and Ser-16 each contribute to the ATP site. Position 14 (Thr-14) interacts with sn-glycerol 3-phosphate. Residue Arg-18 coordinates ADP. Sn-glycerol 3-phosphate-binding residues include Arg-84, Glu-85, Tyr-136, and Asp-246. Glycerol is bound by residues Arg-84, Glu-85, Tyr-136, Asp-246, and Gln-247. 2 residues coordinate ADP: Thr-268 and Gly-311. Thr-268, Gly-311, Gln-315, and Gly-412 together coordinate ATP. ADP contacts are provided by Gly-412 and Asn-416.

It belongs to the FGGY kinase family. In terms of assembly, homotetramer and homodimer (in equilibrium). Heterodimer with EIIA-Glc. Binds 1 zinc ion per glycerol kinase EIIA-Glc dimer. The zinc ion is important for dimerization.

It carries out the reaction glycerol + ATP = sn-glycerol 3-phosphate + ADP + H(+). The protein operates within polyol metabolism; glycerol degradation via glycerol kinase pathway; sn-glycerol 3-phosphate from glycerol: step 1/1. Its activity is regulated as follows. Activity of this regulatory enzyme is affected by several metabolites. Allosterically and non-competitively inhibited by fructose 1,6-bisphosphate (FBP) and unphosphorylated phosphocarrier protein EIIA-Glc (III-Glc), an integral component of the bacterial phosphotransferase (PTS) system. In terms of biological role, key enzyme in the regulation of glycerol uptake and metabolism. Catalyzes the phosphorylation of glycerol to yield sn-glycerol 3-phosphate. This chain is Glycerol kinase, found in Shigella flexneri.